A 135-amino-acid chain; its full sequence is uncharacterized protein (135 aa).

Helical transmembrane passes span 4-24 (IIIC…WIFG), 26-46 (WDMP…TGVI), 68-88 (LILV…NGAW), and 93-113 (LIAY…CAAL).

The protein belongs to the bacteriophage holin family. Cp-1 holin subfamily.

Its subcellular location is the cell membrane. This is an uncharacterized protein from Clostridium perfringens (strain 13 / Type A).